We begin with the raw amino-acid sequence, 399 residues long: MTTAVEATAQVVEAFGKPHVNVGTIGHVDHGKTTLTAAITKHYGNFVAYDQIDKAPEERKRGITIATAHVEYQTEKRHYAHVDCPGHADYVKNMIVGAAQMDAAILVVSGVDGPMPQTREHILLAKQVGVGYIVVYINKADVSDPDMIGLVEMEVRELLSKYGFPGDEVPVVIGSALKALEDDDGEYGKKSIDKLMERLDDYVEVPPRSVDLPFLLPIEDVFSISGRGTVVTGRIEKGEIKIGDEIEIIGLKATQKTTCTGVEMFKKLLEKGSAGLNVGILLRGTKREEVERGQVLAKPGTITPHRKFKAEVYILKKEEGGRHTPFFANYQPQFYLRTTDVTGSIKLLEGKEMVMPGDNVSIEVELQVPIAMDKGLRFAIREGGRTVGSGVVSEILEWV.

Positions Lys17–Arg208 constitute a tr-type G domain. The interval Gly26–Thr33 is G1. Gly26–Thr33 lines the GTP pocket. Position 33 (Thr33) interacts with Mg(2+). Residues Gly62–Ala66 form a G2 region. The segment at Asp83–Gly86 is G3. Residues Asp83 to His87 and Asn138 to Asp141 contribute to the GTP site. The segment at Asn138–Asp141 is G4. The tract at residues Ser175–Leu177 is G5.

Belongs to the TRAFAC class translation factor GTPase superfamily. Classic translation factor GTPase family. EF-Tu/EF-1A subfamily. Monomer.

It localises to the cytoplasm. The enzyme catalyses GTP + H2O = GDP + phosphate + H(+). In terms of biological role, GTP hydrolase that promotes the GTP-dependent binding of aminoacyl-tRNA to the A-site of ribosomes during protein biosynthesis. This Wolbachia sp. subsp. Brugia malayi (strain TRS) protein is Elongation factor Tu 1.